A 243-amino-acid chain; its full sequence is R-spondin-2 (243 aa).

Residues methionine 1–cysteine 21 form the signal peptide. 11 disulfides stabilise this stretch: cysteine 40-cysteine 46, cysteine 43-cysteine 52, cysteine 55-cysteine 74, cysteine 78-cysteine 93, cysteine 96-cysteine 104, cysteine 101-cysteine 110, cysteine 113-cysteine 124, cysteine 128-cysteine 141, cysteine 145-cysteine 187, cysteine 156-cysteine 163, and cysteine 196-cysteine 203. An FU repeat occupies methionine 90 to proline 134. The TSP type-1 domain occupies glycine 144–proline 204. Asparagine 160 carries N-linked (GlcNAc...) asparagine glycosylation. The span at proline 204–leucine 224 shows a compositional bias: basic residues. The tract at residues proline 204–glutamine 243 is disordered.

It belongs to the R-spondin family. Interacts with WNT1. Binds heparin. Interacts with LGR4, LGR5 and LGR6. Interacts with E3 ubiquitin ligases RNF43 and ZNRF3.

The protein localises to the secreted. Activator of the canonical Wnt signaling pathway by acting as a ligand for LGR4-6 receptors. Upon binding to LGR4-6 (LGR4, LGR5 or LGR6), LGR4-6 associate with phosphorylated LRP6 and frizzled receptors that are activated by extracellular Wnt receptors, triggering the canonical Wnt signaling pathway to increase expression of target genes. Also regulates the canonical Wnt/beta-catenin-dependent pathway and non-canonical Wnt signaling by acting as an inhibitor of ZNRF3, an important regulator of the Wnt signaling pathway. During embryonic development, plays a crucial role in limb specification, amplifying the Wnt signaling pathway independently of LGR4-6 receptors, possibly by acting as a direct antagonistic ligand to RNF43 and ZNRF3, hence governing the number of limbs an embryo should form. The sequence is that of R-spondin-2 (RSPO2) from Homo sapiens (Human).